We begin with the raw amino-acid sequence, 251 residues long: Pyrroloquinoline-quinone synthase (251 aa).

The protein belongs to the PqqC family.

It carries out the reaction 6-(2-amino-2-carboxyethyl)-7,8-dioxo-1,2,3,4,7,8-hexahydroquinoline-2,4-dicarboxylate + 3 O2 = pyrroloquinoline quinone + 2 H2O2 + 2 H2O + H(+). It participates in cofactor biosynthesis; pyrroloquinoline quinone biosynthesis. Functionally, ring cyclization and eight-electron oxidation of 3a-(2-amino-2-carboxyethyl)-4,5-dioxo-4,5,6,7,8,9-hexahydroquinoline-7,9-dicarboxylic-acid to PQQ. This Pseudomonas savastanoi pv. phaseolicola (strain 1448A / Race 6) (Pseudomonas syringae pv. phaseolicola (strain 1448A / Race 6)) protein is Pyrroloquinoline-quinone synthase.